We begin with the raw amino-acid sequence, 144 residues long: Putative pre-16S rRNA nuclease (144 aa).

It belongs to the YqgF nuclease family.

The protein resides in the cytoplasm. Functionally, could be a nuclease involved in processing of the 5'-end of pre-16S rRNA. The protein is Putative pre-16S rRNA nuclease of Wigglesworthia glossinidia brevipalpis.